The sequence spans 837 residues: Protein kintoun (837 aa).

4 disordered regions span residues 100-119 (APSSRPGSGGDRGAAPGSHW), 205-224 (LPGVIPARPDGEPKGPLPDF), 230-249 (YPAAPGPRAPSPPEAALQPA), and 363-515 (AAAP…GPGT). The span at 233-242 (APGPRAPSPP) shows a compositional bias: pro residues. A compositionally biased stretch (basic and acidic residues) spans 428 to 442 (GEERVPKPGEQDLSR). A compositionally biased stretch (low complexity) spans 445 to 459 (GSPPGSVEEPSPGGE). 2 positions are modified to phosphoserine: S461 and S467. The span at 484 to 498 (ESARGDSSVETREES) shows a compositional bias: basic and acidic residues. 3 positions are modified to phosphoserine: S640, S641, and S773.

This sequence belongs to the PIH1 family. Kintoun subfamily. Interacts with CFAP300. Interacts with DNAAF4. Interacts with DNAAF6/PIH1D3. Interacts with DNAI2 and HSPA1A.

Its subcellular location is the cytoplasm. The protein resides in the dynein axonemal particle. In terms of biological role, required for cytoplasmic pre-assembly of axonemal dyneins, thereby playing a central role in motility in cilia and flagella. Involved in pre-assembly of dynein arm complexes in the cytoplasm before intraflagellar transport loads them for the ciliary compartment. This Homo sapiens (Human) protein is Protein kintoun.